The following is a 321-amino-acid chain: Quinol oxidase subunit 2 (321 aa).

A signal peptide spans M1 to G25. C26 carries N-palmitoyl cysteine lipidation. C26 carries the S-diacylglycerol cysteine lipid modification. 2 helical membrane-spanning segments follow: residues S49 to V69 and T90 to P110. The tract at residues Q294–E321 is disordered. Over residues S300 to E321 the composition is skewed to basic and acidic residues.

It belongs to the cytochrome c oxidase subunit 2 family. Interacts with FloT.

The protein localises to the cell membrane. It is found in the membrane raft. The enzyme catalyses 2 a quinol + O2 = 2 a quinone + 2 H2O. Catalyzes quinol oxidation with the concomitant reduction of oxygen to water. Major component for energy conversion during vegetative growth. Subunit II transfers the electrons from a quinol to the binuclear center of the catalytic subunit I. This is Quinol oxidase subunit 2 (qoxA) from Bacillus subtilis (strain 168).